The chain runs to 438 residues: Xylose isomerase (438 aa).

Catalysis depends on residues histidine 100 and aspartate 103. 7 residues coordinate Mg(2+): glutamate 231, glutamate 267, histidine 270, aspartate 295, aspartate 306, aspartate 308, and aspartate 338.

The protein belongs to the xylose isomerase family. In terms of assembly, homotetramer. Mg(2+) serves as cofactor.

Its subcellular location is the cytoplasm. The catalysed reaction is alpha-D-xylose = alpha-D-xylulofuranose. The sequence is that of Xylose isomerase from Pseudomonas syringae pv. tomato (strain ATCC BAA-871 / DC3000).